The chain runs to 943 residues: AP-1 complex subunit beta-1 (943 aa).

An N6-acetyllysine modification is found at lysine 318. Tyrosine 574 carries the 3'-nitrotyrosine modification. Residues 584 to 621 (GGRGVVHKSLPPRTASSESTESPETAPAGAPAGDQPDV) form a disordered region. Positions 594–616 (PPRTASSESTESPETAPAGAPAG) are enriched in low complexity.

It belongs to the adaptor complexes large subunit family. As to quaternary structure, adaptor protein complex 1 (AP-1) is a heterotetramer composed of two large adaptins (gamma-type subunit AP1G1 and beta-type subunit AP1B1), a medium adaptin (mu-type subunit AP1M1 or AP1M2) and a small adaptin (sigma-type subunit AP1S1 or AP1S2 or AP1S3). As to expression, widely expressed.

Its subcellular location is the cytoplasmic vesicle. The protein localises to the clathrin-coated vesicle membrane. It localises to the golgi apparatus. Its function is as follows. Subunit of clathrin-associated adaptor protein complex 1 that plays a role in protein sorting in the late-Golgi/trans-Golgi network (TGN) and/or endosomes. The AP complexes mediate both the recruitment of clathrin to membranes and the recognition of sorting signals within the cytosolic tails of transmembrane cargo molecules. This is AP-1 complex subunit beta-1 (Ap1b1) from Mus musculus (Mouse).